The primary structure comprises 189 residues: MIFLYKIFGKWDPTEVEVRDLGIKRYVSLAPVIVPHSSGKHARQQFNKSEISIVERLANNLMRTETNTGKKQVTLRAVEEAFDIINRKTQQNPIQILVDAIANAGPREEVVRLKYGGISVPKAVDTAPQRRVDTALRYISMGTNAAAFKSKRSVAECLATELIGAANRDTKSFSINRKDAKERVAKAAR.

It belongs to the universal ribosomal protein uS7 family. In terms of assembly, part of the 30S ribosomal subunit.

Its function is as follows. One of the primary rRNA binding proteins, it binds directly to 16S rRNA where it nucleates assembly of the head domain of the 30S subunit. Is located at the subunit interface close to the decoding center. In Methanosarcina mazei (strain ATCC BAA-159 / DSM 3647 / Goe1 / Go1 / JCM 11833 / OCM 88) (Methanosarcina frisia), this protein is Small ribosomal subunit protein uS7.